A 325-amino-acid polypeptide reads, in one-letter code: Lactonase drp35 (325 aa).

10 residues coordinate Ca(2+): Glu46, Thr108, Gly110, Asp128, Thr131, Tyr133, Asp136, Asn183, Asp234, and Ser235. Catalysis depends on Asp234, which acts as the Proton donor.

The protein belongs to the SMP-30/CGR1 family. The cofactor is Ca(2+).

The protein localises to the cytoplasm. Its function is as follows. Exhibits lactonase activity. Acts in cells with perturbed membrane integrity and is possibly related to the membrane homeostasis. The polypeptide is Lactonase drp35 (drp35) (Staphylococcus epidermidis (strain ATCC 35984 / DSM 28319 / BCRC 17069 / CCUG 31568 / BM 3577 / RP62A)).